The chain runs to 371 residues: Cytochrome b (371 aa).

4 helical membrane passes run 25-45 (FGSMLLACSSMQVLTGFFLAV), 69-90 (WMMQNLHAIGASMFFICIYTHI), 105-125 (WLSGTTLLIMLMATAFFGYVL), and 170-190 (FFALHFILPFGIISLSSLHIM). 2 residues coordinate heme b: H75 and H89. Heme b contacts are provided by H174 and H188. An a ubiquinone-binding site is contributed by H193. The next 4 helical transmembrane spans lie at 218–238 (YKDMLMLSLMILALLMTVAFF), 280–300 (LGGALALVMSIMILLTAPFTH), 312–332 (IMQLMFWTLVATFAVITWAAT), and 339–358 (FTTISQVASTMYFMFFITNP).

It belongs to the cytochrome b family. The cytochrome bc1 complex contains 3 respiratory subunits (MT-CYB, CYC1 and UQCRFS1), 2 core proteins (UQCRC1 and UQCRC2) and probably 6 low-molecular weight proteins. Heme b serves as cofactor.

Its subcellular location is the mitochondrion inner membrane. Its function is as follows. Component of the ubiquinol-cytochrome c reductase complex (complex III or cytochrome b-c1 complex) that is part of the mitochondrial respiratory chain. The b-c1 complex mediates electron transfer from ubiquinol to cytochrome c. Contributes to the generation of a proton gradient across the mitochondrial membrane that is then used for ATP synthesis. The sequence is that of Cytochrome b (MT-CYB) from Eryx colubrinus colubrinus.